A 190-amino-acid chain; its full sequence is Putative manganese efflux pump MntP (190 aa).

Helical transmembrane passes span 3–23, 39–59, 65–85, 106–128, 133–155, and 157–177; these read PASIIFLAFAMSTDAFAAAVG, IGLIFGVIEAITPVVGWFIGQ, VANWDHWIAFSLLLLLGLHMI, WLLAVTGLATSIDALAVGVGLAF, IWVAASAIGLATMTMVTLGVMLG, and AIGTVMGQRAEVLGGVVLIIV.

Belongs to the MntP (TC 9.B.29) family.

The protein localises to the cell inner membrane. In terms of biological role, probably functions as a manganese efflux pump. In Pseudomonas fluorescens (strain ATCC BAA-477 / NRRL B-23932 / Pf-5), this protein is Putative manganese efflux pump MntP.